Here is a 519-residue protein sequence, read N- to C-terminus: Bud site selection protein 22 (519 aa).

The segment at E241 to I497 is disordered. Positions A244–D254 are enriched in polar residues. Phosphothreonine is present on T257. Positions D267–E282 are enriched in polar residues. The segment covering V321–D337 has biased composition (acidic residues). Over residues E338–P348 the composition is skewed to basic and acidic residues. S367 carries the phosphoserine modification. Position 371 is a phosphothreonine (T371). S375 is modified (phosphoserine). Over residues R407 to W420 the composition is skewed to basic residues. The stretch at S426–E470 forms a coiled coil. Basic and acidic residues-rich tracts occupy residues V431–K459 and S466–I497.

This sequence belongs to the BUD22 family.

The protein localises to the nucleus. Functionally, involved in positioning the proximal bud pole signal. The chain is Bud site selection protein 22 (BUD22) from Saccharomyces cerevisiae (strain ATCC 204508 / S288c) (Baker's yeast).